We begin with the raw amino-acid sequence, 1607 residues long: Abnormal cell migration protein 38 (1607 aa).

12 disordered regions span residues 14-52 (EFNK…SQDF), 67-93 (RLSP…QYHV), 167-222 (STSY…AAQA), 326-425 (GSSA…PPSQ), 459-478 (SPNT…GMDQ), 549-594 (MVHR…QHSY), 845-931 (YDEN…PETE), 1017-1061 (SVQV…DYDM), 1141-1241 (EPSP…VTPK), 1319-1378 (ETPN…KGQL), 1392-1445 (FANV…PQAV), and 1517-1607 (KVKT…STDP). Polar residues-rich tracts occupy residues 81 to 93 (PGPS…QYHV) and 179 to 191 (PSGN…NHQQ). The span at 195-205 (VPQVQQQPAKP) shows a compositional bias: low complexity. The span at 206-218 (KTTKKRPPPKKKT) shows a compositional bias: basic residues. Positions 327 to 341 (SSASSSAQPSQPAKK) are enriched in low complexity. 2 stretches are compositionally biased toward polar residues: residues 349–371 (VPNT…QITP) and 379–425 (PTTT…PPSQ). Residues 585–594 (NSHSQSQHSY) are compositionally biased toward low complexity. Over residues 858–871 (EEPESESESEPEAE) the composition is skewed to acidic residues. 2 stretches are compositionally biased toward basic and acidic residues: residues 872-886 (PEPK…EPAR) and 907-917 (YRNESESTFDW). Low complexity-rich tracts occupy residues 1333–1354 (PNIP…SVSV), 1395–1419 (VPSS…VSAK), and 1584–1601 (LLGT…SSGL).

In terms of tissue distribution, expressed in gonad distal tip cells and gonad sheath cells.

It is found in the nucleus. It localises to the cytoplasm. Its function is as follows. During gonad development, involved in distal tip cell (DTC) migration from the dorsal side of the hermaphrodite body to the midbody which allows for the formation of gonad arms. Role in gonad DTC migration may be in association with integrin related proteins ina-1 and mig-15. The chain is Abnormal cell migration protein 38 from Caenorhabditis elegans.